Here is a 364-residue protein sequence, read N- to C-terminus: 3-isopropylmalate dehydrogenase (364 aa).

Residue 79–92 coordinates NAD(+); it reads GSKWDHLPEIEKPE. The substrate site is built by R100, R110, R139, and D227. Residues D227, D251, and D255 each contribute to the Mg(2+) site. Residue 285–297 coordinates NAD(+); it reads GSAPNIAGKTIAN.

The protein belongs to the isocitrate and isopropylmalate dehydrogenases family. LeuB type 1 subfamily. Homodimer. Mg(2+) is required as a cofactor. The cofactor is Mn(2+).

The protein localises to the cytoplasm. The enzyme catalyses (2R,3S)-3-isopropylmalate + NAD(+) = 4-methyl-2-oxopentanoate + CO2 + NADH. The protein operates within amino-acid biosynthesis; L-leucine biosynthesis; L-leucine from 3-methyl-2-oxobutanoate: step 3/4. Functionally, catalyzes the oxidation of 3-carboxy-2-hydroxy-4-methylpentanoate (3-isopropylmalate) to 3-carboxy-4-methyl-2-oxopentanoate. The product decarboxylates to 4-methyl-2 oxopentanoate. The sequence is that of 3-isopropylmalate dehydrogenase from Buchnera aphidicola subsp. Thelaxes suberi.